The primary structure comprises 474 residues: Methylenetetrahydrofolate--tRNA-(uracil-5-)-methyltransferase TrmFO (474 aa).

14–19 serves as a coordination point for FAD; that stretch reads GGGLAG.

It belongs to the MnmG family. TrmFO subfamily. The cofactor is FAD.

The protein resides in the cytoplasm. The catalysed reaction is uridine(54) in tRNA + (6R)-5,10-methylene-5,6,7,8-tetrahydrofolate + NADH + H(+) = 5-methyluridine(54) in tRNA + (6S)-5,6,7,8-tetrahydrofolate + NAD(+). It carries out the reaction uridine(54) in tRNA + (6R)-5,10-methylene-5,6,7,8-tetrahydrofolate + NADPH + H(+) = 5-methyluridine(54) in tRNA + (6S)-5,6,7,8-tetrahydrofolate + NADP(+). In terms of biological role, catalyzes the folate-dependent formation of 5-methyl-uridine at position 54 (M-5-U54) in all tRNAs. The polypeptide is Methylenetetrahydrofolate--tRNA-(uracil-5-)-methyltransferase TrmFO (Caulobacter vibrioides (strain ATCC 19089 / CIP 103742 / CB 15) (Caulobacter crescentus)).